The following is a 399-amino-acid chain: S-adenosylmethionine synthase (399 aa).

Histidine 19 serves as a coordination point for ATP. A Mg(2+)-binding site is contributed by aspartate 21. Glutamate 47 contacts K(+). Residues glutamate 60 and glutamine 103 each contribute to the L-methionine site. The tract at residues 103 to 113 (QSPDIAQGVNQ) is flexible loop. Residues 179 to 181 (DGK), 246 to 247 (RF), aspartate 255, 261 to 262 (RK), alanine 278, and lysine 282 contribute to the ATP site. Aspartate 255 provides a ligand contact to L-methionine. Residue lysine 286 participates in L-methionine binding.

It belongs to the AdoMet synthase family. As to quaternary structure, homotetramer; dimer of dimers. Mg(2+) serves as cofactor. The cofactor is K(+).

It localises to the cytoplasm. The enzyme catalyses L-methionine + ATP + H2O = S-adenosyl-L-methionine + phosphate + diphosphate. The protein operates within amino-acid biosynthesis; S-adenosyl-L-methionine biosynthesis; S-adenosyl-L-methionine from L-methionine: step 1/1. Functionally, catalyzes the formation of S-adenosylmethionine (AdoMet) from methionine and ATP. The overall synthetic reaction is composed of two sequential steps, AdoMet formation and the subsequent tripolyphosphate hydrolysis which occurs prior to release of AdoMet from the enzyme. The chain is S-adenosylmethionine synthase from Halalkalibacterium halodurans (strain ATCC BAA-125 / DSM 18197 / FERM 7344 / JCM 9153 / C-125) (Bacillus halodurans).